Consider the following 159-residue polypeptide: Phosphopantetheine adenylyltransferase (159 aa).

Ser9 contacts substrate. Residues 9-10 (SF) and His17 each bind ATP. Lys41, Ile73, and Lys87 together coordinate substrate. ATP-binding positions include 88 to 90 (GLR), Glu98, and 122 to 128 (WGYVSSS).

This sequence belongs to the bacterial CoaD family. As to quaternary structure, homohexamer. Mg(2+) is required as a cofactor.

The protein localises to the cytoplasm. The enzyme catalyses (R)-4'-phosphopantetheine + ATP + H(+) = 3'-dephospho-CoA + diphosphate. It participates in cofactor biosynthesis; coenzyme A biosynthesis; CoA from (R)-pantothenate: step 4/5. Reversibly transfers an adenylyl group from ATP to 4'-phosphopantetheine, yielding dephospho-CoA (dPCoA) and pyrophosphate. The chain is Phosphopantetheine adenylyltransferase from Nocardioides sp. (strain ATCC BAA-499 / JS614).